Reading from the N-terminus, the 143-residue chain is Large ribosomal subunit protein uL11 (143 aa).

It belongs to the universal ribosomal protein uL11 family. As to quaternary structure, part of the ribosomal stalk of the 50S ribosomal subunit. Interacts with L10 and the large rRNA to form the base of the stalk. L10 forms an elongated spine to which L12 dimers bind in a sequential fashion forming a multimeric L10(L12)X complex. One or more lysine residues are methylated.

Forms part of the ribosomal stalk which helps the ribosome interact with GTP-bound translation factors. The protein is Large ribosomal subunit protein uL11 of Nitrosomonas europaea (strain ATCC 19718 / CIP 103999 / KCTC 2705 / NBRC 14298).